The following is a 642-amino-acid chain: Uromodulin (642 aa).

The N-terminal stretch at 1 to 24 (MGIPLTWMLLVMMVTSWFTLAEAS) is a signal peptide. Asparagine 25 and asparagine 38 each carry an N-linked (GlcNAc...) asparagine glycan. An EGF-like 1 domain is found at 28–64 (EARRCSECHNNATCTVDGVVTTCSCQTGFTGDGLVCE). 21 disulfide bridges follow: cysteine 32–cysteine 41, cysteine 35–cysteine 50, cysteine 52–cysteine 63, cysteine 69–cysteine 82, cysteine 77–cysteine 91, cysteine 93–cysteine 105, cysteine 111–cysteine 125, cysteine 119–cysteine 134, cysteine 136–cysteine 147, cysteine 149–cysteine 160, cysteine 154–cysteine 171, cysteine 175–cysteine 268, cysteine 196–cysteine 283, cysteine 218–cysteine 256, cysteine 224–cysteine 288, cysteine 249–cysteine 257, cysteine 298–cysteine 307, cysteine 301–cysteine 316, cysteine 318–cysteine 348, cysteine 336–cysteine 426, and cysteine 367–cysteine 390. The 42-residue stretch at 65–106 (DMDECATPWTHNCSNSSCVNTPGSFKCSCQDGFRLTPELSCT) folds into the EGF-like 2; calcium-binding domain. Asparagine 76 and asparagine 79 each carry an N-linked (GlcNAc...) asparagine glycan. The region spanning 107 to 148 (DVDECSEQGLSNCHALATCVNTEGDYLCVCPEGFTGDGWYCE) is the EGF-like 3; calcium-binding domain. Residues 149-172 (CSPGSCEPGLDCLPQGPDGKLVCQ) form a beta hairpin region. Residues 173–292 (DPCNTYETLT…CNLAYCTDPS (120 aa)) form a D10C region. A glycan (N-linked (GlcNAc...) asparagine) is linked at asparagine 233. N-linked (GlcNAc...) asparagine glycosylation occurs at asparagine 276. Residues 293–324 (SVEGTCEECRVDEDCISDNGRWRCQCKQDSNI) form the EGF-like 4 domain. N-linked (GlcNAc...) asparagine glycosylation is present at asparagine 323. The ZP-N stretch occupies residues 335 to 430 (ECGANDIKMS…RMNFECSYPL (96 aa)). In terms of domain architecture, ZP spans 335–590 (ECGANDIKMS…PTCSGTRFRS (256 aa)). Asparagine 397 and asparagine 448 each carry an N-linked (GlcNAc...) asparagine glycan. The tract at residues 431-454 (DMKVSLKTSLQPMVSALNISLGGT) is flexible ZP-N/ZP-C linker; important for secretion and polymerization into filaments. The internal hydrophobic patch (IHP) stretch occupies residues 455–465 (GKFTVRMALFQ). Residues 455–590 (GKFTVRMALF…PTCSGTRFRS (136 aa)) form a ZP-C region. Intrachain disulfides connect cysteine 507–cysteine 567, cysteine 528–cysteine 583, and cysteine 572–cysteine 579. Asparagine 514 carries an N-linked (GlcNAc...) asparagine glycan. Residues 587–590 (RFRS) form an essential for cleavage by HPN region. The segment at 599–607 (VLNLGPITR) is external hydrophobic patch (EHP); regulates polymerization into filaments. Alanine 618 carries the GPI-anchor amidated alanine lipid modification. Positions 619 to 642 (SSNLRLLSIWLLLFPSATLIFMVQ) are cleaved as a propeptide — removed in mature form.

As to quaternary structure, homodimer that then polymerizes into long filaments. The filaments can additionally assemble laterally to form a sheet. The filaments consist of a zigzag-shaped backbone with laterally protruding arms which interact with bacterial adhesin fimH. Two fimH molecules can bind to a single UMOD monomer. In terms of processing, N-glycosylated. Post-translationally, proteolytically cleaved at a conserved C-terminal proteolytic cleavage site to generate the secreted form found in urine. This cleavage is catalyzed by HPN. In terms of tissue distribution, detected in urine (secreted form). Detected in kidney thick ascending limb epithelial cells (at protein level).

It localises to the secreted. Its subcellular location is the apical cell membrane. The protein localises to the basolateral cell membrane. It is found in the cell projection. The protein resides in the cilium membrane. Its function is as follows. Functions in biogenesis and organization of the apical membrane of epithelial cells of the thick ascending limb of Henle's loop (TALH), where it promotes formation of complex filamentous gel-like structure that may play a role in the water barrier permeability. May serve as a receptor for binding and endocytosis of cytokines (IL-1, IL-2) and TNF. Facilitates neutrophil migration across renal epithelia. In terms of biological role, in the urine, may contribute to colloid osmotic pressure, retards passage of positively charged electrolytes and inhibits formation of liquid containing supersaturated salts and subsequent formation of salt crystals. Protects against urinary tract infections by binding to type 1 fimbriated E.coli. Binds to the bacterial adhesin fimH which mediates the stable formation of bacterial aggregates, prevents the binding of E.coli to uroplakins UPK1A and UPK1B which act as urothelial receptors for type I fimbriae, and allows for pathogen clearance through micturation. Also promotes aggregation of other bacteria including K.pneumoniae, P.aeruginosa and S.mitis and so may also protect against other uropathogens. This is Uromodulin (Umod) from Mus musculus (Mouse).